Consider the following 283-residue polypeptide: NFU1 iron-sulfur cluster scaffold homolog, mitochondrial (283 aa).

Residues M1–R65 constitute a mitochondrion transit peptide. The interval I182–V250 is nifU. Positions 219 and 222 each coordinate [4Fe-4S] cluster.

Belongs to the NifU family.

The protein localises to the mitochondrion. Functionally, molecular scaffold for [Fe-S] cluster assembly of mitochondrial iron-sulfur proteins. In Drosophila sechellia (Fruit fly), this protein is NFU1 iron-sulfur cluster scaffold homolog, mitochondrial.